We begin with the raw amino-acid sequence, 383 residues long: Succinyl-diaminopimelate desuccinylase (383 aa).

Histidine 69 contributes to the Zn(2+) binding site. Aspartate 71 is an active-site residue. Aspartate 103 is a Zn(2+) binding site. The Proton acceptor role is filled by glutamate 137. Residues glutamate 138, glutamate 166, and histidine 357 each coordinate Zn(2+).

It belongs to the peptidase M20A family. DapE subfamily. As to quaternary structure, homodimer. Requires Zn(2+) as cofactor. It depends on Co(2+) as a cofactor.

It carries out the reaction N-succinyl-(2S,6S)-2,6-diaminopimelate + H2O = (2S,6S)-2,6-diaminopimelate + succinate. It functions in the pathway amino-acid biosynthesis; L-lysine biosynthesis via DAP pathway; LL-2,6-diaminopimelate from (S)-tetrahydrodipicolinate (succinylase route): step 3/3. Catalyzes the hydrolysis of N-succinyl-L,L-diaminopimelic acid (SDAP), forming succinate and LL-2,6-diaminopimelate (DAP), an intermediate involved in the bacterial biosynthesis of lysine and meso-diaminopimelic acid, an essential component of bacterial cell walls. This chain is Succinyl-diaminopimelate desuccinylase, found in Rickettsia prowazekii (strain Madrid E).